Here is a 217-residue protein sequence, read N- to C-terminus: Heart- and neural crest derivatives-expressed protein 2 (217 aa).

Positions 76–116 (DHSHYGGVPPGAGPPGLGGPRPVKRRGTANRKERRRTQSIN) are disordered. Residues 83–94 (VPPGAGPPGLGG) are compositionally biased toward gly residues. The span at 97-112 (PVKRRGTANRKERRRT) shows a compositional bias: basic residues. The region spanning 99–151 (KRRGTANRKERRRTQSINSAFAELRECIPNVPADTKLSKIKTLRLATSYIAYL) is the bHLH domain.

In terms of assembly, efficient DNA binding requires dimerization with another bHLH protein. Forms homodimers and heterodimers with TCF3 gene products E12 and E47, HAND1 and HEY1, HEY2 and HEYL (hairy-related transcription factors).

It localises to the nucleus. Essential for cardiac morphogenesis, particularly for the formation of the right ventricle and of the aortic arch arteries. Required for vascular development and regulation of angiogenesis, possibly through a VEGF signaling pathway. Also plays an important role in limb development, particularly in the establishment of anterior-posterior polarization, acting as an upstream regulator of sonic hedgehog (SHH) induction in the limb bud. Is involved in the development of branchial arches, which give rise to unique structures in the head and neck. Binds DNA on E-box consensus sequence 5'-CANNTG-3'. The polypeptide is Heart- and neural crest derivatives-expressed protein 2 (Hand2) (Rattus norvegicus (Rat)).